The chain runs to 168 residues: MNRIEHYHDWLRDAHAMEKQAESMLESMASRIDNYPELRARIEQHLSETKNQIVQLETILDRNDISRSVIKDSMSKMAALGQSIGGIFPSDEIVKGSISGYVFEQFEIACYTSLLAAAKNAGDTASIPTIEAILNEEKQMADWLIQNIPQTTEKFLIRSETDGVEAKK.

The protein is Protein YciE (yciE) of Escherichia coli (strain K12).